The sequence spans 265 residues: Mlc titration factor A (265 aa).

Zn(2+) contacts are provided by His111, His148, His152, and Glu211.

The protein belongs to the MtfA family. Interacts with Mlc with high affinity. The cofactor is Zn(2+).

Its subcellular location is the cytoplasm. Its activity is regulated as follows. Proteolytic activity is stimulated by interaction with Mlc. Addition of the chelators EDTA or phenanthroline significantly reduces the peptidase activity, whereas the addition of other protease inhibitors has much less effect. Involved in the modulation of the activity of the glucose-phosphotransferase system (glucose-PTS). Interacts with the transcriptional repressor Mlc, preventing its interaction with DNA and leading to the modulation of expression of genes regulated by Mlc, including ptsG, which encodes the PTS system glucose-specific EIICB component. Functionally, shows zinc-dependent metallopeptidase activity. In vitro, can cleave several artificial substrates. The greatest activity and specificity is observed for L-alanine fused to 4-nitroanilide (L-alanine-pNA). Shows significantly lower activity towards L-arginine-pNA, L-proline-pNA, hippuryl-L-phenylalanine and hippuryl-L-arginine, and cannot use FTC-casein. Mlc does not appear to be a biologically relevant peptidase substrate. Biologically relevant targets may have a function in growth transition under changing environmental conditions. The chain is Mlc titration factor A from Escherichia coli (strain K12).